Reading from the N-terminus, the 707-residue chain is Serine/threonine protein kinase UL97 (707 aa).

Residues 1–14 (MSSALRSRARSASL) show a composition bias toward low complexity. Disordered stretches follow at residues 1 to 33 (MSSALRSRARSASLGTTTQGWDPPPLRRPSRAR), 113 to 146 (DGEKEDAASDKENLRRPVVPSTSSRGSAASGDGY), 176 to 198 (FTGGSDPSDSVSGVRGGRKRPLR), and 231 to 264 (ESQDSAVASGPGRIPQPLSGSSGEESATAVEADS). Over residues 113–127 (DGEKEDAASDKENLR) the composition is skewed to basic and acidic residues. Residues 178–188 (GGSDPSDSVSG) are compositionally biased toward low complexity. ATP contacts are provided by residues 337-345 (LGQGSFGEV) and Lys359. Catalysis depends on Asp456, which acts as the Proton acceptor.

It belongs to the protein kinase superfamily. Tyr protein kinase family. HCMV ganciclovir subfamily. In terms of assembly, interacts with UL83. In terms of processing, autophosphorylates on serine and threonine residues.

The protein localises to the virion. The enzyme catalyses L-seryl-[protein] + ATP = O-phospho-L-seryl-[protein] + ADP + H(+). It catalyses the reaction L-threonyl-[protein] + ATP = O-phospho-L-threonyl-[protein] + ADP + H(+). Functionally, serine/threonine protein kinase that plays important roles in several processes including nuclear viral egress, viral replication or regulation of host cell cycle progression. Participates in the acquisition of tegument during virion morphogenesis in the nucleus. Phosphorylates the viral nuclear egress complex (NEC) subunits UL50 and UL53. Redistributes the host nuclear lamina by phosphorylating cellular Lamins-A/C. Plays a role in viral DNA synthesis by phosphorylating the DNA polymerase processivity factor UL44. Stimulates host cell cycle to support viral DNA synthesis by phosphorylating host retinoblastoma/RB1 protein. Additional substrates have been identified including host EF1D or H2B. Also phosphorylates host SAMHD1 and thereby counteracts its antiviral effect by reducing its dNTP hydrolase activity. The protein is Serine/threonine protein kinase UL97 (UL97) of Human cytomegalovirus (strain AD169) (HHV-5).